Here is a 296-residue protein sequence, read N- to C-terminus: 4-hydroxy-tetrahydrodipicolinate synthase (296 aa).

T46 is a pyruvate binding site. The Proton donor/acceptor role is filled by Y134. K162 (schiff-base intermediate with substrate) is an active-site residue. I204 lines the pyruvate pocket.

Belongs to the DapA family. As to quaternary structure, homotetramer; dimer of dimers.

Its subcellular location is the cytoplasm. The enzyme catalyses L-aspartate 4-semialdehyde + pyruvate = (2S,4S)-4-hydroxy-2,3,4,5-tetrahydrodipicolinate + H2O + H(+). It functions in the pathway amino-acid biosynthesis; L-lysine biosynthesis via DAP pathway; (S)-tetrahydrodipicolinate from L-aspartate: step 3/4. In terms of biological role, catalyzes the condensation of (S)-aspartate-beta-semialdehyde [(S)-ASA] and pyruvate to 4-hydroxy-tetrahydrodipicolinate (HTPA). In Clostridium novyi (strain NT), this protein is 4-hydroxy-tetrahydrodipicolinate synthase.